Here is a 251-residue protein sequence, read N- to C-terminus: MSGHSKWATTKHKKAANDAKRGKEFAKLIKNIEVAARTGGGDPSANPTLDDMIKKAKKASVPNDNIERARKRGSGEEAGGADWMNIMYEGYGPNGVAMLIECLTDNRNRAATEVRTAMTKNGGNLGESGSVSYMFTRTGVVTVQKGDLSEDDVLMAVLEAGAEEVNDNGDLFEVTCAPTDIQAVRDALVEAGIEVEDSESDFRASVQVPLDADGARKIFKLVDALEDSDDVQNVYTNIDLSDEVLTELEND.

The tract at residues Met-1 to Gly-22 is disordered.

Belongs to the TACO1 family.

It is found in the cytoplasm. The sequence is that of Probable transcriptional regulatory protein Cgl1663/cg1872 from Corynebacterium glutamicum (strain ATCC 13032 / DSM 20300 / JCM 1318 / BCRC 11384 / CCUG 27702 / LMG 3730 / NBRC 12168 / NCIMB 10025 / NRRL B-2784 / 534).